The primary structure comprises 602 residues: Toxin YwqJ (602 aa).

Positions 1–235 constitute an LXG domain; that stretch reads MSKVFESKSL…TTYIDAKTQQ (235 aa). Coiled-coil stretches lie at residues 6–41 and 227–251; these read ESKS…VADL and TYID…EANK.

This sequence in the N-terminal section; belongs to the LXG family. As to quaternary structure, probably interacts with cognate immunity protein YwqK but not with non-cognate immunity proteins. The interaction inhibits the toxic activity of YwqJ.

It localises to the secreted. In terms of biological role, toxic component of one of 6 LXG toxin-immunity modules in this strain. They promote kin selection, mediate competition in biofilms, and drive spatial segregation of different strains, indicating that LXG toxins may help avoid warfare between strains in biofilms. Mediates intercellular competition during biofilm formation; disruption of the operon disadvantages the bacteria, but overexpression of the cognate immunity protein restores growth in competition with wild-type. Overexpression alone in situ causes growth arrest but not cell lysis; no effect is seen on DNA or rRNA. Co-overexpression with cognate immunity protein YwqK does not cause growth arrest. The toxic effect is dependent on the epsA and tapA operons which are required for biofilm formation. Its toxic effects are probably neutralized by its cognate immunity protein YwqK, but not by immunity proteins specific to other toxins with the LXG domain. May have deaminase activity. The polypeptide is Toxin YwqJ (ywqJ) (Bacillus subtilis (strain 168)).